A 430-amino-acid chain; its full sequence is Mannan endo-1,4-beta-mannosidase (430 aa).

The Proton donor role is filled by glutamate 173. Glutamate 269 (nucleophile) is an active-site residue. 2 consecutive CBM10 domains span residues 357–390 (SCGT…CVVA) and 395–424 (SCNW…CIAA).

Belongs to the glycosyl hydrolase 5 (cellulase A) family.

The catalysed reaction is Random hydrolysis of (1-&gt;4)-beta-D-mannosidic linkages in mannans, galactomannans and glucomannans.. In terms of biological role, catalyzes the endo hydrolysis of beta-1,4-linked mannan, galactomannan and glucomannan. It is able to hydrolyze mannosidic linkages that are flanked by mannose or glucose. The chain is Mannan endo-1,4-beta-mannosidase from Cellvibrio japonicus (strain Ueda107) (Pseudomonas fluorescens subsp. cellulosa).